The sequence spans 216 residues: Probable calcium-binding protein CML35 (216 aa).

The disordered stretch occupies residues 18-58 (TKSKASVSRSEPSSFSSNASSSSSDGSYGNLKQGPTATPIS). The segment covering 23-44 (SVSRSEPSSFSSNASSSSSDGS) has biased composition (low complexity). EF-hand domains lie at 66 to 101 (DFYT…LSHE), 103 to 138 (PSQE…TSGE), 141 to 176 (VETE…IGDE), and 178 to 213 (CTLE…AMND). Residues Asp79, Asp81, Asp83, and Asp90 each contribute to the Ca(2+) site. Asp154, Asp156, Asn158, Lys160, Glu165, Asp191, Asn193, Asp195, and Asp202 together coordinate Ca(2+).

Functionally, potential calcium sensor. This chain is Probable calcium-binding protein CML35 (CML35), found in Arabidopsis thaliana (Mouse-ear cress).